The chain runs to 505 residues: Sucrose porin (505 aa).

Residues 1–22 form the signal peptide; sequence MYRKSTLAMLIALLTSAASAHA. The interval 44-87 is disordered; sequence ENRAQTAENRAGAAEKKVQQLTAQQQKNQNSTQEVAQRTARLEK. Positions 62–72 are enriched in low complexity; it reads QQLTAQQQKNQ.

Belongs to the porin LamB (TC 1.B.3) family. As to quaternary structure, homotrimer.

Its subcellular location is the cell outer membrane. Functionally, porin for sucrose uptake. This chain is Sucrose porin (scrY), found in Salmonella typhimurium.